The sequence spans 635 residues: PTS system fructose-specific EIIABC component (635 aa).

The PTS EIIA type-2 domain occupies 5–149; the sequence is ELLTKHTIKL…DAIIDIINQH (145 aa). Residue His67 is the Tele-phosphohistidine intermediate; for EIIA activity of the active site. His67 is subject to Phosphohistidine; by HPr. The segment at 149 to 168 is disordered; it reads HDKDDDEEEEEEEAAPAPAG. The segment covering 152 to 162 has biased composition (acidic residues); the sequence is DDDEEEEEEEA. In terms of domain architecture, PTS EIIB type-2 spans 172–267; it reads ILAVTACPTG…PQELIEKAMN (96 aa). The active-site Phosphocysteine intermediate; for EIIB activity is the Cys178. Phosphocysteine; by EIIA is present on Cys178. The tract at residues 273 to 293 is disordered; the sequence is YQGSGGGSAASNDDEEAKGKS. The 335-residue stretch at 301-635 folds into the PTS EIIC type-2 domain; it reads FYKHLMSGVS…GIVKKPVTEK (335 aa). Transmembrane regions (helical) follow at residues 312-332, 350-370, 392-412, 428-448, 470-490, 511-531, 544-564, 569-589, and 608-628; these read MLPF…WGIH, FIGG…FIAM, NAGF…VILL, PVLI…QFVV, NLVL…GGPL, AAIM…TTIF, ITCY…FAAA, VIPA…FFRV, and MLYL…LGIV.

The protein localises to the cell membrane. It catalyses the reaction D-fructose(out) + N(pros)-phospho-L-histidyl-[protein] = D-fructose 1-phosphate(in) + L-histidyl-[protein]. Functionally, the phosphoenolpyruvate-dependent sugar phosphotransferase system (sugar PTS), a major carbohydrate active transport system, catalyzes the phosphorylation of incoming sugar substrates concomitantly with their translocation across the cell membrane. This system is involved in fructose transport. In Bacillus subtilis (strain 168), this protein is PTS system fructose-specific EIIABC component (fruA).